The chain runs to 214 residues: CRISPR-associated protein Cas5 (214 aa).

It belongs to the CRISPR-associated protein Cas5 family.

CRISPR (clustered regularly interspaced short palindromic repeat) is an adaptive immune system that provides protection against mobile genetic elements (viruses, transposable elements and conjugative plasmids). CRISPR clusters contain spacers, sequences complementary to antecedent mobile elements, and target invading nucleic acids. CRISPR clusters are transcribed and processed into CRISPR RNA (crRNA). In terms of biological role, has a role in fruiting body development, sporulation and aggregation. This is CRISPR-associated protein Cas5 (devS) from Myxococcus xanthus (strain DK1622).